A 175-amino-acid polypeptide reads, in one-letter code: Avenin-like a3 (175 aa).

A signal peptide spans 1-19 (MKTMFLLALLAFTATSAVA).

It belongs to the prolamin family. In terms of processing, contains 7 disulfide bonds.

Its function is as follows. Seed storage protein. Not integrated in the gluten polymer through disulfide bonds, unless incorporated by reduction and reoxidation during dough making. Increases dough strength and bread volume, but decreases dough stability when added into a base wheat flour. This is Avenin-like a3 from Triticum aestivum (Wheat).